A 495-amino-acid chain; its full sequence is Maternal protein exuperantia-1 (495 aa).

2 disordered regions span residues 197–217 (DESA…SSND) and 377–495 (TIKP…AATN). Composition is skewed to polar residues over residues 207–216 (ENVNRNGSSN) and 398–414 (AASS…TSTE).

Its function is as follows. Ensures the proper localization of the mRNA of the bicoid gene to the anterior regions of the oocyte thus playing a fundamental role in the establishment of the polarity of the oocyte. May bind the bcd mRNA. The polypeptide is Maternal protein exuperantia-1 (exu1) (Drosophila pseudoobscura pseudoobscura (Fruit fly)).